Consider the following 223-residue polypeptide: Phosphoribosylformylglycinamidine synthase subunit PurQ (223 aa).

The region spanning 3–223 is the Glutamine amidotransferase type-1 domain; it reads SAVILLPGLN…LFAGALGITA (221 aa). Catalysis depends on C87, which acts as the Nucleophile. Residues H197 and E199 contribute to the active site.

Part of the FGAM synthase complex composed of 1 PurL, 1 PurQ and 2 PurS subunits.

The protein localises to the cytoplasm. The catalysed reaction is N(2)-formyl-N(1)-(5-phospho-beta-D-ribosyl)glycinamide + L-glutamine + ATP + H2O = 2-formamido-N(1)-(5-O-phospho-beta-D-ribosyl)acetamidine + L-glutamate + ADP + phosphate + H(+). It catalyses the reaction L-glutamine + H2O = L-glutamate + NH4(+). Its pathway is purine metabolism; IMP biosynthesis via de novo pathway; 5-amino-1-(5-phospho-D-ribosyl)imidazole from N(2)-formyl-N(1)-(5-phospho-D-ribosyl)glycinamide: step 1/2. Part of the phosphoribosylformylglycinamidine synthase complex involved in the purines biosynthetic pathway. Catalyzes the ATP-dependent conversion of formylglycinamide ribonucleotide (FGAR) and glutamine to yield formylglycinamidine ribonucleotide (FGAM) and glutamate. The FGAM synthase complex is composed of three subunits. PurQ produces an ammonia molecule by converting glutamine to glutamate. PurL transfers the ammonia molecule to FGAR to form FGAM in an ATP-dependent manner. PurS interacts with PurQ and PurL and is thought to assist in the transfer of the ammonia molecule from PurQ to PurL. In Brucella abortus biovar 1 (strain 9-941), this protein is Phosphoribosylformylglycinamidine synthase subunit PurQ.